The following is a 303-amino-acid chain: Protoheme IX farnesyltransferase (303 aa).

6 consecutive transmembrane segments (helical) span residues 25-45 (MGLVQGNLIPAFAGAWLAIVM), 54-74 (IPQILLMLVGSTLIMGGACAL), 118-138 (CLFLLNIPSGVLGLIGIVGYV), 166-186 (IGWVAIDGSLSLAAVALFLVV), 230-250 (LVLLLPLPFLLSNLGVTFVVI), and 280-300 (FVYSLNYLVVFFALVVVVSLI).

Belongs to the UbiA prenyltransferase family. Protoheme IX farnesyltransferase subfamily. As to quaternary structure, interacts with CtaA.

It localises to the cell membrane. The enzyme catalyses heme b + (2E,6E)-farnesyl diphosphate + H2O = Fe(II)-heme o + diphosphate. Its pathway is porphyrin-containing compound metabolism; heme O biosynthesis; heme O from protoheme: step 1/1. In terms of biological role, converts heme B (protoheme IX) to heme O by substitution of the vinyl group on carbon 2 of heme B porphyrin ring with a hydroxyethyl farnesyl side group. This Staphylococcus epidermidis (strain ATCC 35984 / DSM 28319 / BCRC 17069 / CCUG 31568 / BM 3577 / RP62A) protein is Protoheme IX farnesyltransferase.